The sequence spans 381 residues: tRNA pseudouridine synthase D (381 aa).

The active-site Nucleophile is the D81. Positions 160–335 (GMPNYFGSQR…TLGSRRFFWV (176 aa)) constitute a TRUD domain.

This sequence belongs to the pseudouridine synthase TruD family.

The catalysed reaction is uridine(13) in tRNA = pseudouridine(13) in tRNA. In terms of biological role, responsible for synthesis of pseudouridine from uracil-13 in transfer RNAs. The polypeptide is tRNA pseudouridine synthase D (Helicobacter acinonychis (strain Sheeba)).